Reading from the N-terminus, the 457-residue chain is Exodeoxyribonuclease 7 large subunit (457 aa).

Belongs to the XseA family. Heterooligomer composed of large and small subunits.

It localises to the cytoplasm. The catalysed reaction is Exonucleolytic cleavage in either 5'- to 3'- or 3'- to 5'-direction to yield nucleoside 5'-phosphates.. Functionally, bidirectionally degrades single-stranded DNA into large acid-insoluble oligonucleotides, which are then degraded further into small acid-soluble oligonucleotides. This is Exodeoxyribonuclease 7 large subunit from Enterobacter sp. (strain 638).